A 477-amino-acid polypeptide reads, in one-letter code: Proline--tRNA ligase (477 aa).

It belongs to the class-II aminoacyl-tRNA synthetase family. ProS type 3 subfamily. In terms of assembly, homodimer.

The protein localises to the cytoplasm. The catalysed reaction is tRNA(Pro) + L-proline + ATP = L-prolyl-tRNA(Pro) + AMP + diphosphate. Its function is as follows. Catalyzes the attachment of proline to tRNA(Pro) in a two-step reaction: proline is first activated by ATP to form Pro-AMP and then transferred to the acceptor end of tRNA(Pro). The chain is Proline--tRNA ligase from Methanoculleus marisnigri (strain ATCC 35101 / DSM 1498 / JR1).